Consider the following 401-residue polypeptide: Formate-dependent phosphoribosylglycinamide formyltransferase (401 aa).

Residues 22–23 (EL) and Glu-82 contribute to the N(1)-(5-phospho-beta-D-ribosyl)glycinamide site. ATP is bound by residues Arg-115, Lys-157, 162–167 (SSGKGQ), 197–200 (EGFV), and Glu-205. The region spanning 120–315 (RLAAETLALP…EFELHARAIL (196 aa)) is the ATP-grasp domain. Mg(2+) is bound by residues Glu-274 and Glu-286. N(1)-(5-phospho-beta-D-ribosyl)glycinamide contacts are provided by residues Asp-293, Lys-362, and 369–370 (RR).

This sequence belongs to the PurK/PurT family. In terms of assembly, homodimer.

It carries out the reaction N(1)-(5-phospho-beta-D-ribosyl)glycinamide + formate + ATP = N(2)-formyl-N(1)-(5-phospho-beta-D-ribosyl)glycinamide + ADP + phosphate + H(+). Its pathway is purine metabolism; IMP biosynthesis via de novo pathway; N(2)-formyl-N(1)-(5-phospho-D-ribosyl)glycinamide from N(1)-(5-phospho-D-ribosyl)glycinamide (formate route): step 1/1. Functionally, involved in the de novo purine biosynthesis. Catalyzes the transfer of formate to 5-phospho-ribosyl-glycinamide (GAR), producing 5-phospho-ribosyl-N-formylglycinamide (FGAR). Formate is provided by PurU via hydrolysis of 10-formyl-tetrahydrofolate. This is Formate-dependent phosphoribosylglycinamide formyltransferase from Polaromonas naphthalenivorans (strain CJ2).